A 664-amino-acid chain; its full sequence is Acetolactate synthase 2, chloroplastic (664 aa).

Residues 1 to 34 (MAAAAAAPSPSFSKTLSSSSSKSSTLLPRSTFPF) show a composition bias toward low complexity. Residues 1–51 (MAAAAAAPSPSFSKTLSSSSSKSSTLLPRSTFPFPHHPHKTTPPPLHLTPT) form a disordered region. The N-terminal 91 residues, 1 to 91 (MAAAAAAPSP…VSRFAPDEPR (91 aa)), are a transit peptide targeting the chloroplast. E138 serves as a coordination point for thiamine diphosphate. A disulfide bridge links C158 with C304. Residues R240, 346 to 367 (HGTV…FGVR), and 389 to 408 (DIDS…ICAD) each bind FAD. Positions 481-561 (QHQMWAAQYY…VKIMLLNNQH (81 aa)) are thiamine pyrophosphate binding. Residues D532 and N559 each coordinate Mg(2+).

The protein belongs to the TPP enzyme family. Mg(2+) serves as cofactor. It depends on thiamine diphosphate as a cofactor.

The protein localises to the plastid. It is found in the chloroplast. The enzyme catalyses 2 pyruvate + H(+) = (2S)-2-acetolactate + CO2. The protein operates within amino-acid biosynthesis; L-isoleucine biosynthesis; L-isoleucine from 2-oxobutanoate: step 1/4. It participates in amino-acid biosynthesis; L-valine biosynthesis; L-valine from pyruvate: step 1/4. This Nicotiana tabacum (Common tobacco) protein is Acetolactate synthase 2, chloroplastic (ALS SURB).